We begin with the raw amino-acid sequence, 320 residues long: Cytochrome f (320 aa).

The N-terminal stretch at 1–35 is a signal peptide; the sequence is MKLNSLINLIQKSIYSCTLLLIILNIICVAPNSSN. 4 residues coordinate heme: phenylalanine 37, cysteine 57, cysteine 60, and histidine 61. A helical membrane pass occupies residues 286–306; that stretch reads IKGMIVFFFASVLAQIFFVLK.

The protein belongs to the cytochrome f family. In terms of assembly, the 4 large subunits of the cytochrome b6-f complex are cytochrome b6, subunit IV (17 kDa polypeptide, petD), cytochrome f and the Rieske protein, while the 4 small subunits are PetG, PetL, PetM and PetN. The complex functions as a dimer. It depends on heme as a cofactor.

It is found in the plastid. The protein localises to the chloroplast thylakoid membrane. Its function is as follows. Component of the cytochrome b6-f complex, which mediates electron transfer between photosystem II (PSII) and photosystem I (PSI), cyclic electron flow around PSI, and state transitions. The chain is Cytochrome f from Pyropia yezoensis (Susabi-nori).